Here is a 152-residue protein sequence, read N- to C-terminus: SsrA-binding protein (152 aa).

Belongs to the SmpB family.

Its subcellular location is the cytoplasm. Functionally, required for rescue of stalled ribosomes mediated by trans-translation. Binds to transfer-messenger RNA (tmRNA), required for stable association of tmRNA with ribosomes. tmRNA and SmpB together mimic tRNA shape, replacing the anticodon stem-loop with SmpB. tmRNA is encoded by the ssrA gene; the 2 termini fold to resemble tRNA(Ala) and it encodes a 'tag peptide', a short internal open reading frame. During trans-translation Ala-aminoacylated tmRNA acts like a tRNA, entering the A-site of stalled ribosomes, displacing the stalled mRNA. The ribosome then switches to translate the ORF on the tmRNA; the nascent peptide is terminated with the 'tag peptide' encoded by the tmRNA and targeted for degradation. The ribosome is freed to recommence translation, which seems to be the essential function of trans-translation. The sequence is that of SsrA-binding protein from Helicobacter pylori (strain HPAG1).